We begin with the raw amino-acid sequence, 209 residues long: Small ribosomal subunit protein uS4 (209 aa).

Residues 22–45 are disordered; it reads RGRNPLLRKPNPPGQHGMQRKKKS. Positions 93–154 constitute an S4 RNA-binding domain; sequence CRLDNIVYRL…KSRRLAIVTE (62 aa).

This sequence belongs to the universal ribosomal protein uS4 family. As to quaternary structure, part of the 30S ribosomal subunit. Contacts protein S5. The interaction surface between S4 and S5 is involved in control of translational fidelity.

One of the primary rRNA binding proteins, it binds directly to 16S rRNA where it nucleates assembly of the body of the 30S subunit. In terms of biological role, with S5 and S12 plays an important role in translational accuracy. The protein is Small ribosomal subunit protein uS4 of Chlamydia muridarum (strain MoPn / Nigg).